A 274-amino-acid chain; its full sequence is Pyrogallol hydroxytransferase small subunit (274 aa).

Positions 13, 16, 19, 23, 68, 71, 76, 109, 126, 129, 145, and 149 each coordinate [4Fe-4S] cluster.

In terms of assembly, heterodimer of a large and a small subunit. It depends on [4Fe-4S] cluster as a cofactor.

The catalysed reaction is 1,2,3,5-tetrahydroxybenzene + 1,2,3-trihydroxybenzene = 1,2,3,5-tetrahydroxybenzene + 1,3,5-trihydroxybenzene. Isomerization of pyrogallol to phloroglucin. The protein is Pyrogallol hydroxytransferase small subunit (bthL) of Pelobacter acidigallici.